The sequence spans 617 residues: Secretogranin-2 (617 aa).

Positions M1 to A27 are cleaved as a signal peptide. Residues A28–F30 constitute a propeptide that is removed on maturation. The disordered stretch occupies residues N123–M147. The residue at position 151 (Y151) is a Sulfotyrosine. Phosphoserine occurs at positions 174, 268, 432, 532, 555, and 556. The interval N552–Q583 is disordered.

It belongs to the chromogranin/secretogranin protein family. Interacts with Secretogranin III/SCG3.

It is found in the secreted. In terms of biological role, neuroendocrine protein of the granin family that regulates the biogenesis of secretory granules. The polypeptide is Secretogranin-2 (SCG2) (Macaca fascicularis (Crab-eating macaque)).